The chain runs to 393 residues: Polygalacturonase (393 aa).

An N-terminal signal peptide occupies residues 1 to 23; it reads MANRRSLFSLSLIFVFMINSAIA. PbH1 repeat units follow at residues 115-136, 178-204, 205-226, 228-248, 258-279, and 288-309; these read VNGV…WACK, FQNV…HVQM, SSGV…SIGP, TSNL…SIGS, VQNV…RIKS, and ARNI…VIDQ. The active-site Proton donor is D219. An intrachain disulfide couples C221 to C238. The active site involves H242. An N-linked (GlcNAc...) asparagine glycan is attached at N260. 2 disulfides stabilise this stretch: C349–C355 and C376–C392.

Belongs to the glycosyl hydrolase 28 family.

It is found in the secreted. The protein localises to the cell wall. The catalysed reaction is (1,4-alpha-D-galacturonosyl)n+m + H2O = (1,4-alpha-D-galacturonosyl)n + (1,4-alpha-D-galacturonosyl)m.. Functionally, acts in concert with the pectinesterase, in the ripening process. Is involved in cell wall metabolism, specifically in polyuronide degradation. This Prunus persica (Peach) protein is Polygalacturonase.